The primary structure comprises 576 residues: Citrinin biosynthesis transcriptional activator ctnR (576 aa).

The segment at 1–27 is disordered; it reads MLSHEMASTAHRQPSRPTTRQRQRTGR. Residues 29–56 constitute a DNA-binding region (zn(2)-C6 fungal-type); it reads CEECRRRKLRCDGQQPRCGVCVDSGVTC. Residues 102–148 are disordered; the sequence is STPLTNDHHDGCSVSSASSRSDSNPPPTVSEPDMSLPNTTTSVSSAP. Residues 114-124 are compositionally biased toward low complexity; that stretch reads SVSSASSRSDS. Polar residues predominate over residues 137–148; the sequence is LPNTTTSVSSAP.

It localises to the nucleus. Its function is as follows. Transcription factor that regulates the expression of the gene cluster that mediates the biosynthesis of the mycotoxin citrinin, a hepato-nephrotoxic compound to humans due to inhibition of respiration complex III. The polypeptide is Citrinin biosynthesis transcriptional activator ctnR (Monascus purpureus (Red mold)).